A 60-amino-acid polypeptide reads, in one-letter code: Temporin-MT5 (60 aa).

Residues 1–22 (MFTLKKPLLLLFFLATINLSLC) form the signal peptide. Residues 23 to 44 (EQERNAEEERRDEPDERNAEVE) constitute a propeptide, removed in mature form. Residue Phe-58 is modified to Phenylalanine amide.

The protein belongs to the frog skin active peptide (FSAP) family. Temporin subfamily. In terms of tissue distribution, expressed by the skin glands.

It is found in the secreted. Functionally, antimicrobial peptide. The chain is Temporin-MT5 from Amolops mantzorum (Sichuan torrent frog).